Reading from the N-terminus, the 249-residue chain is MSKHSHFKDKKKFYKKIEQFKEFQERISVHFQNEKLLYQAFTHSSYVNEHRKKPYEDNERLEFLGDAVLELTISQFLFAKYPAMSEGDLTKLRAAIVCEPSLVSLAHELSFGDLVLLGKGEEMTGGRKRPALLADVFEAFIGALYLDQGLDPVQQFLKVYVFPKINDGAFSHVMDFKSQLQEFVQRDGKGSLEYKILNEKGPAHNREFEALVSLKGEALGIGNGRSKKEAEQHAAQEALAKMQKHHTKQ.

Residues Phe20 to Gly149 form the RNase III domain. Residue Glu62 coordinates Mg(2+). The active site involves Asp66. Mg(2+) contacts are provided by Asp135 and Glu138. Residue Glu138 is part of the active site. The DRBM domain occupies Asp175 to Lys244. Residues Asn223 to Gln249 are disordered.

This sequence belongs to the ribonuclease III family. In terms of assembly, homodimer. It depends on Mg(2+) as a cofactor.

The protein resides in the cytoplasm. The catalysed reaction is Endonucleolytic cleavage to 5'-phosphomonoester.. In terms of biological role, digests double-stranded RNA. Involved in the processing of primary rRNA transcript to yield the immediate precursors to the large and small rRNAs (23S and 16S). Processes some mRNAs, and tRNAs when they are encoded in the rRNA operon. Processes pre-crRNA and tracrRNA of type II CRISPR loci if present in the organism. This is Ribonuclease 3 from Bacillus velezensis (strain DSM 23117 / BGSC 10A6 / LMG 26770 / FZB42) (Bacillus amyloliquefaciens subsp. plantarum).